The primary structure comprises 1441 residues: Pleiotropic drug resistance protein TUR2 (1441 aa).

One can recognise an ABC transporter 1 domain in the interval 158–430; sequence LSALHLMPSG…FESMGFKCPE (273 aa). Position 191–198 (191–198) interacts with ATP; sequence GPPGAGKT. The region spanning 508–721 is the ABC transmembrane type-2 1 domain; that stretch reads ELLKACIDRE…AQNAIAVNEF (214 aa). 6 consecutive transmembrane segments (helical) span residues 526 to 546, 559 to 579, 614 to 634, 646 to 666, 671 to 691, and 756 to 776; these read FVYI…MTVF, ATIF…NGFA, IPIS…VIGF, LLLV…AAVG, VADT…GFII, and IGVG…ILFL. Residues 843-1095 form the ABC transporter 2 domain; the sequence is ITFDNVKYSV…HLIKYFESID (253 aa). 888-895 serves as a coordination point for ATP; sequence GVSGRGKT. The 215-residue stretch at 1168–1382 folds into the ABC transmembrane type-2 2 domain; it reads MQCLACLWKQ…TLYGLVVSQF (215 aa). The next 7 helical transmembrane spans lie at 1187–1207, 1215–1235, 1275–1295, 1302–1322, 1332–1352, 1363–1383, and 1413–1433; these read YTAT…TIFW, TSLD…FIGI, VPHI…MIGF, FLWY…YGMM, IAAI…GFII, WYYW…SQFG, and VVGV…AFSI.

Belongs to the ABC transporter superfamily. ABCG family. PDR (TC 3.A.1.205) subfamily. In terms of tissue distribution, ubiquitous.

It localises to the cell membrane. Its function is as follows. May be a general defense protein. Seems involved in turion (dormant buds) formation. Confers resistance to the diterpenoid antifungal agent sclareol. The sequence is that of Pleiotropic drug resistance protein TUR2 (TUR2) from Spirodela polyrhiza (Giant duckweed).